The chain runs to 676 residues: Envelope glycoprotein (676 aa).

A signal peptide spans 1-34; sequence MACSTLSKSPKDKIDPRDLLIPLILFLSLKGARS. The receptor-binding domain (RBD) stretch occupies residues 35-270; sequence AAPGSSPHQV…KYQNLGPRVP (236 aa). Residues 35–620 lie on the Extracellular side of the membrane; it reads AAPGSSPHQV…FNRSPWFTTL (586 aa). N-linked (GlcNAc...) asparagine; by host glycosylation occurs at Asn46. 5 disulfide bridges follow: Cys80/Cys132, Cys106/Cys121, Cys107/Cys117, Cys155/Cys175, and Cys167/Cys180. Position 89 (His89) interacts with Zn(2+). A Zn(2+)-binding site is contributed by Asp120. A glycan (N-linked (GlcNAc...) asparagine; by host) is linked at Asn202. Cys212 and Cys218 are joined by a disulfide. The segment at 287–322 is disordered; it reads NPLPKPAKSPSASNSTPTLISPSPAPTQPPPAGTGD. Residues 294 to 308 are compositionally biased toward low complexity; it reads KSPSASNSTPTLISP. Over residues 309–318 the composition is skewed to pro residues; it reads SPAPTQPPPA. Asn336 carries an N-linked (GlcNAc...) asparagine; by host glycan. 6 cysteine pairs are disulfide-bonded: Cys346–Cys349, Cys346–Cys573, Cys376–Cys430, Cys395–Cys407, Cys437–Cys450, and Cys565–Cys572. The CXXC signature appears at 346-349; that stretch reads CWLC. N-linked (GlcNAc...) asparagine; by host glycosylation is found at Asn368 and Asn375. 2 N-linked (GlcNAc...) asparagine; by host glycosylation sites follow: Asn408 and Asn444. Residues 482 to 502 are fusion peptide; it reads VSLTLALLLGGLTMGGIAAGV. A coiled-coil region spans residues 513–547; sequence QQFQQLHAAVQDDLKEVEKSITNLEKSLTSLSEVV. The tract at residues 548 to 564 is immunosuppression; that stretch reads LQNRRGLDLLFLKEGGL. Positions 565-573 match the CX6CC motif; sequence CAALKEECC. The helical transmembrane segment at 621–641 threads the bilayer; the sequence is ISTIMGPLIILLLILLFGPCI. Residue Cys640 is the site of S-palmitoyl cysteine; by host attachment. Residues 642–676 lie on the Cytoplasmic side of the membrane; sequence LNRLVQFVKDRISVVQALVLTQQYHQLKPLEYEPQ. The short motif at 665–668 is the YXXL motif; contains endocytosis signal element; that stretch reads YHQL.

In terms of assembly, the mature envelope protein (Env) consists of a trimer of SU-TM heterodimers attached by a labile interchain disulfide bond. Post-translationally, specific enzymatic cleavages in vivo yield mature proteins. Envelope glycoproteins are synthesized as an inactive precursor that is N-glycosylated and processed likely by host cell furin or by a furin-like protease in the Golgi to yield the mature SU and TM proteins. The cleavage site between SU and TM requires the minimal sequence [KR]-X-[KR]-R. The R-peptide is released from the C-terminus of the cytoplasmic tail of the TM protein upon particle formation as a result of proteolytic cleavage by the viral protease. Cleavage of this peptide is required for TM to become fusogenic. The CXXC motif is highly conserved across a broad range of retroviral envelope proteins. It is thought to participate in the formation of a labile disulfide bond possibly with the CX6CC motif present in the transmembrane protein. Isomerization of the intersubunit disulfide bond to an SU intrachain disulfide bond is thought to occur upon receptor recognition in order to allow membrane fusion. In terms of processing, the transmembrane protein is palmitoylated. Post-translationally, the R-peptide is palmitoylated.

It is found in the virion membrane. The protein localises to the host cell membrane. In terms of biological role, the surface protein (SU) attaches the virus to the host cell by binding to its receptor. This interaction triggers the refolding of the transmembrane protein (TM) and is thought to activate its fusogenic potential by unmasking its fusion peptide. Fusion occurs at the host cell plasma membrane. Its function is as follows. The transmembrane protein (TM) acts as a class I viral fusion protein. Under the current model, the protein has at least 3 conformational states: pre-fusion native state, pre-hairpin intermediate state, and post-fusion hairpin state. During viral and target cell membrane fusion, the coiled coil regions (heptad repeats) assume a trimer-of-hairpins structure, positioning the fusion peptide in close proximity to the C-terminal region of the ectodomain. The formation of this structure appears to drive apposition and subsequent fusion of viral and target cell membranes. Membranes fusion leads to delivery of the nucleocapsid into the cytoplasm. This chain is Envelope glycoprotein (env), found in Mus musculus (Mouse).